The sequence spans 342 residues: Probable receptor-like protein kinase At4g10390 (342 aa).

The 296-residue stretch at 41 to 336 (SNFSRLIGSG…IKEIPSLSFL (296 aa)) folds into the Protein kinase domain. Residues 47–55 (IGSGGYSSI) and Lys69 contribute to the ATP site. Catalysis depends on Asp165, which acts as the Proton acceptor. Phosphoserine occurs at positions 169 and 201. Tyr220 is modified (phosphotyrosine).

It belongs to the protein kinase superfamily. Ser/Thr protein kinase family.

The catalysed reaction is L-seryl-[protein] + ATP = O-phospho-L-seryl-[protein] + ADP + H(+). It catalyses the reaction L-threonyl-[protein] + ATP = O-phospho-L-threonyl-[protein] + ADP + H(+). The sequence is that of Probable receptor-like protein kinase At4g10390 from Arabidopsis thaliana (Mouse-ear cress).